The chain runs to 190 residues: MDLSVLPNNNHPDKFLQLDVKSLTRSSALLQASLVRFPGGNYPAAQHWQNLVYSQREKKNIAAQRIRGSSADSLVTADSPPPSMSSVMKNNPLYGDLSLEEAMEERKKNPSWTIEEYDKHSLHTNLSGHLKENPNDLRFWLGDMYTPGFDTLLKKEEKQEKHSKFCRMGLILLVVISILVTIVTIITFFT.

At Ser79 the chain carries Phosphoserine. 2 N-linked (GlcNAc...) asparagine glycosylation sites follow: Asn109 and Asn125. A helical membrane pass occupies residues 169 to 189 (GLILLVVISILVTIVTIITFF).

This sequence belongs to the MINAR family. Interacts with NOTCH2. In terms of tissue distribution, highly expressed in the auditory hair cells.

It localises to the lysosome membrane. Its subcellular location is the endoplasmic reticulum membrane. Binds cholesterol and may regulate the distribution and homeostasis of cholesterol in hair cells. May play a role in angiogenesis. In Homo sapiens (Human), this protein is Major intrinsically disordered NOTCH2-binding receptor 1-like.